Here is a 69-residue protein sequence, read N- to C-terminus: Cytochrome c oxidase subunit 8A, mitochondrial (69 aa).

The transit peptide at 1–25 (MSVLTPLLLRGLTGSARRLPVLRAQ) directs the protein to the mitochondrion. Positions 2–19 (SVLTPLLLRGLTGSARRL) match the SIFI-degron motif. Residues 26–36 (VHSKPPREKLG) lie on the Mitochondrial matrix side of the membrane. A helical transmembrane segment spans residues 37–60 (TMDVAIGLTSCFVCFLLPSGWVLS). Residues 61 to 69 (HLETYKKRE) are Mitochondrial intermembrane-facing.

It belongs to the cytochrome c oxidase VIII family. In terms of assembly, component of the cytochrome c oxidase (complex IV, CIV), a multisubunit enzyme composed of 14 subunits. The complex is composed of a catalytic core of 3 subunits MT-CO1, MT-CO2 and MT-CO3, encoded in the mitochondrial DNA, and 11 supernumerary subunits COX4I, COX5A, COX5B, COX6A, COX6B, COX6C, COX7A, COX7B, COX7C, COX8 and NDUFA4, which are encoded in the nuclear genome. The complex exists as a monomer or a dimer and forms supercomplexes (SCs) in the inner mitochondrial membrane with NADH-ubiquinone oxidoreductase (complex I, CI) and ubiquinol-cytochrome c oxidoreductase (cytochrome b-c1 complex, complex III, CIII), resulting in different assemblies (supercomplex SCI(1)III(2)IV(1) and megacomplex MCI(2)III(2)IV(2)). In terms of processing, in response to mitochondrial stress, the precursor protein is ubiquitinated by the SIFI complex in the cytoplasm before mitochondrial import, leading to its degradation. Within the SIFI complex, UBR4 initiates ubiquitin chain that are further elongated or branched by KCMF1.

It is found in the mitochondrion inner membrane. The protein operates within energy metabolism; oxidative phosphorylation. Functionally, component of the cytochrome c oxidase, the last enzyme in the mitochondrial electron transport chain which drives oxidative phosphorylation. The respiratory chain contains 3 multisubunit complexes succinate dehydrogenase (complex II, CII), ubiquinol-cytochrome c oxidoreductase (cytochrome b-c1 complex, complex III, CIII) and cytochrome c oxidase (complex IV, CIV), that cooperate to transfer electrons derived from NADH and succinate to molecular oxygen, creating an electrochemical gradient over the inner membrane that drives transmembrane transport and the ATP synthase. Cytochrome c oxidase is the component of the respiratory chain that catalyzes the reduction of oxygen to water. Electrons originating from reduced cytochrome c in the intermembrane space (IMS) are transferred via the dinuclear copper A center (CU(A)) of subunit 2 and heme A of subunit 1 to the active site in subunit 1, a binuclear center (BNC) formed by heme A3 and copper B (CU(B)). The BNC reduces molecular oxygen to 2 water molecules using 4 electrons from cytochrome c in the IMS and 4 protons from the mitochondrial matrix. The polypeptide is Cytochrome c oxidase subunit 8A, mitochondrial (COX8A) (Eulemur fulvus fulvus (Brown lemur)).